A 90-amino-acid chain; its full sequence is Small ribosomal subunit protein bS20 (90 aa).

Basic and acidic residues predominate over residues 1–11 (MANIKSSEKDI). Positions 1 to 29 (MANIKSSEKDIRRTKRRNAANSQNRSRLR) are disordered.

Belongs to the bacterial ribosomal protein bS20 family.

Its function is as follows. Binds directly to 16S ribosomal RNA. The polypeptide is Small ribosomal subunit protein bS20 (Leptospira borgpetersenii serovar Hardjo-bovis (strain JB197)).